Reading from the N-terminus, the 350-residue chain is 4-hydroxy-3-methylbut-2-enyl diphosphate reductase (350 aa).

Position 19 (Cys-19) interacts with [4Fe-4S] cluster. The (2E)-4-hydroxy-3-methylbut-2-enyl diphosphate site is built by His-48 and His-84. Residues His-48 and His-84 each contribute to the dimethylallyl diphosphate site. Positions 48 and 84 each coordinate isopentenyl diphosphate. Cys-106 provides a ligand contact to [4Fe-4S] cluster. His-134 provides a ligand contact to (2E)-4-hydroxy-3-methylbut-2-enyl diphosphate. Dimethylallyl diphosphate is bound at residue His-134. His-134 serves as a coordination point for isopentenyl diphosphate. Glu-136 acts as the Proton donor in catalysis. Thr-175 lines the (2E)-4-hydroxy-3-methylbut-2-enyl diphosphate pocket. Cys-205 contributes to the [4Fe-4S] cluster binding site. (2E)-4-hydroxy-3-methylbut-2-enyl diphosphate-binding residues include Ser-233, Ser-234, Asn-235, and Ser-278. The dimethylallyl diphosphate site is built by Ser-233, Ser-234, Asn-235, and Ser-278. Positions 233, 234, 235, and 278 each coordinate isopentenyl diphosphate.

It belongs to the IspH family. Requires [4Fe-4S] cluster as cofactor.

The enzyme catalyses isopentenyl diphosphate + 2 oxidized [2Fe-2S]-[ferredoxin] + H2O = (2E)-4-hydroxy-3-methylbut-2-enyl diphosphate + 2 reduced [2Fe-2S]-[ferredoxin] + 2 H(+). It catalyses the reaction dimethylallyl diphosphate + 2 oxidized [2Fe-2S]-[ferredoxin] + H2O = (2E)-4-hydroxy-3-methylbut-2-enyl diphosphate + 2 reduced [2Fe-2S]-[ferredoxin] + 2 H(+). The protein operates within isoprenoid biosynthesis; dimethylallyl diphosphate biosynthesis; dimethylallyl diphosphate from (2E)-4-hydroxy-3-methylbutenyl diphosphate: step 1/1. Its pathway is isoprenoid biosynthesis; isopentenyl diphosphate biosynthesis via DXP pathway; isopentenyl diphosphate from 1-deoxy-D-xylulose 5-phosphate: step 6/6. Catalyzes the conversion of 1-hydroxy-2-methyl-2-(E)-butenyl 4-diphosphate (HMBPP) into a mixture of isopentenyl diphosphate (IPP) and dimethylallyl diphosphate (DMAPP). Acts in the terminal step of the DOXP/MEP pathway for isoprenoid precursor biosynthesis. The protein is 4-hydroxy-3-methylbut-2-enyl diphosphate reductase of Brucella anthropi (strain ATCC 49188 / DSM 6882 / CCUG 24695 / JCM 21032 / LMG 3331 / NBRC 15819 / NCTC 12168 / Alc 37) (Ochrobactrum anthropi).